Here is a 3034-residue protein sequence, read N- to C-terminus: Cadherin EGF LAG seven-pass G-type receptor 1 (3034 aa).

The first 29 residues, 1–29 (MAPSSPRVLPALVLLAAAALPALELGAAA), serve as a signal peptide directing secretion. Residues 30 to 2484 (WELRVPGGAR…REHGEVLPLK (2455 aa)) lie on the Extracellular side of the membrane. The span at 222–243 (GTPSESPSVSPSLLNLSQPRAG) shows a compositional bias: low complexity. The interval 222-267 (GTPSESPSVSPSLLNLSQPRAGVVRRSRRGTGSSTSPQFPLPSYQV) is disordered. Asparagine 236 carries N-linked (GlcNAc...) asparagine glycosylation. Cadherin domains are found at residues 261-368 (PLPS…SPVF), 369-474 (EQSE…YPQF), 475-580 (SEKR…APIF), 581-702 (VSSP…DPMF), 703-804 (TQPV…RPVF), 805-907 (QSSH…APRF), 908-1014 (LRDF…PPVF), 1015-1116 (EKDE…PPEL), and 1121-1239 (ILFN…SPLL). 3 N-linked (GlcNAc...) asparagine glycosylation sites follow: asparagine 561, asparagine 649, and asparagine 793. Asparagine 1129, asparagine 1154, asparagine 1228, asparagine 1264, asparagine 1274, and asparagine 1302 each carry an N-linked (GlcNAc...) asparagine glycan. The region spanning 1318–1376 (DDNICLREPCENYMKCVSVLRFDSSAPFISSTTVLFRPIHPITGLRCRCPPGFTGDYCE) is the EGF-like 1; calcium-binding domain. Cystine bridges form between cysteine 1322/cysteine 1333, cysteine 1327/cysteine 1364, cysteine 1366/cysteine 1375, cysteine 1382/cysteine 1393, cysteine 1387/cysteine 1402, cysteine 1404/cysteine 1413, cysteine 1422/cysteine 1433, cysteine 1427/cysteine 1443, and cysteine 1445/cysteine 1455. The 37-residue stretch at 1378–1414 (EIDLCYSNPCGANGRCRSREGGYTCECFEDFTGEHCQ) folds into the EGF-like 2; calcium-binding domain. One can recognise an EGF-like 3; calcium-binding domain in the interval 1418-1456 (RSGRCASGVCKNGGTCVNLLIGGFHCVCPPGEYEHPYCE). Residues 1457–1661 (VSTRSFPPQS…IANNGTRAGC (205 aa)) form the Laminin G-like 1 domain. 3 N-linked (GlcNAc...) asparagine glycosylation sites follow: asparagine 1591, asparagine 1638, and asparagine 1655. Cystine bridges form between cysteine 1635–cysteine 1661, cysteine 1668–cysteine 1679, cysteine 1673–cysteine 1688, cysteine 1690–cysteine 1699, cysteine 1855–cysteine 1885, cysteine 1891–cysteine 1902, cysteine 1896–cysteine 1911, cysteine 1913–cysteine 1922, cysteine 1926–cysteine 1937, cysteine 1931–cysteine 1949, cysteine 1951–cysteine 1960, cysteine 1968–cysteine 1981, and cysteine 1983–cysteine 1993. In terms of domain architecture, EGF-like 4; calcium-binding spans 1664–1700 (QRNFCDGTSCQNGGTCVNRWNTYLCECPLRFGGKNCE). A (3R)-3-hydroxyasparagine modification is found at asparagine 1681. One can recognise a Laminin G-like 2 domain in the interval 1704–1885 (PHPQRFTGES…ALKVRVKDGC (182 aa)). Residues 1887-1922 (VEDPCASSPCPPHSHCRDTWDSYSCICDRGYFGKKC) enclose the EGF-like 5; calcium-binding domain. Aspartate 1904 carries the post-translational modification (3R)-3-hydroxyaspartate. In terms of domain architecture, EGF-like 6; calcium-binding spans 1923–1961 (VDACLLNPCKHVAACVRSPNTPRGYSCECGPGHYGQYCE). One can recognise an EGF-like 7; calcium-binding domain in the interval 1962–1994 (NKVDLPCPKGWWGNPVCGPCHCAVSQGFDPDCN). Asparagine 1994 carries an N-linked (GlcNAc...) asparagine glycan. The region spanning 1996 to 2031 (TNGQCQCKENYYKPPAQDACLPCDCFPHGSHSRACD) is the EGF-like 8; calcium-binding domain. 5 cysteine pairs are disulfide-bonded: cysteine 2000-cysteine 2015, cysteine 2002-cysteine 2018, cysteine 2020-cysteine 2030, cysteine 2039-cysteine 2048, and cysteine 2051-cysteine 2063. Residues 2018-2065 (CDCFPHGSHSRACDMDTGQCACKPGVIGRQCNRCDNPFAEVTSLGCEV) enclose the Laminin EGF-like domain. Residues asparagine 2118, asparagine 2137, asparagine 2144, asparagine 2155, asparagine 2160, and asparagine 2272 are each glycosylated (N-linked (GlcNAc...) asparagine). Residues 2295–2346 (SVSFPADTFKPPEKKEGPVVRLTNRRTTPLTAQPEPRAERETSSSRRRRHPD) form a disordered region. The 165-residue stretch at 2312–2476 (PVVRLTNRRT…AVLMDISRRE (165 aa)) folds into the GAIN-B domain. Disulfide bonds link cysteine 2426/cysteine 2458 and cysteine 2446/cysteine 2460. The segment at 2426–2476 (CVFWNHSLDTGGTGGWSAKGCELLSRNRTHVTCQCSHSASCAVLMDISRRE) is GPS. 2 N-linked (GlcNAc...) asparagine glycosylation sites follow: asparagine 2430 and asparagine 2452. The chain crosses the membrane as a helical span at residues 2485–2505 (IITYAALSLSLVALLVAFVLL). At 2506–2516 (SLVRTLRSNLH) the chain is on the cytoplasmic side. Residues 2517 to 2537 (SIHKNLITALFFSQLIFMVGI) traverse the membrane as a helical segment. Asparagine 2538 is a glycosylation site (N-linked (GlcNAc...) asparagine). Topologically, residues 2538–2542 (NQTEN) are extracellular. Residues 2543–2563 (PFLCTVVAILLHYVSMGTFAW) traverse the membrane as a helical segment. The Cytoplasmic segment spans residues 2564–2587 (TLVENLHVYRMLTEVRNIDTGPMR). A helical membrane pass occupies residues 2588 to 2608 (FYHVVGWGIPAIVTGLAVGLD). The Extracellular segment spans residues 2609 to 2625 (PQGYGNPDFCWLSLQDT). The helical transmembrane segment at 2626–2646 (LIWSFAGPVGTVIIINTVIFV) threads the bilayer. At 2647 to 2670 (LSAKVSCQRKHHYYERKGVVSMLR) the chain is on the cytoplasmic side. A helical transmembrane segment spans residues 2671–2691 (TAFLLLLLVTATWLLGLLAVN). The Extracellular portion of the chain corresponds to 2692–2694 (SDT). Residues 2695 to 2715 (LSFHYLFAAFSCLQGIFVLLF) form a helical membrane-spanning segment. Over 2716-3034 (HCVAHREVRK…QANGSDSEKP (319 aa)) the chain is Cytoplasmic. The disordered stretch occupies residues 2774 to 3034 (TASLDSTTRD…QANGSDSEKP (261 aa)). 4 positions are modified to phosphoserine: serine 2776, serine 2779, serine 2886, and serine 2888. Positions 2893-2909 (TEPHLKVETKVSVELHR) are enriched in basic and acidic residues. Positions 2976 to 2986 (SPTSSRTSSLG) are enriched in low complexity. The span at 3003–3012 (PRREPGREHL) shows a compositional bias: basic and acidic residues. Residues 3020-3034 (RTGSAQANGSDSEKP) are compositionally biased toward polar residues.

Belongs to the G-protein coupled receptor 2 family. LN-TM7 subfamily. The iron and 2-oxoglutarate dependent 3-hydroxylation of aspartate and asparagine is (R) stereospecific within EGF domains. In terms of tissue distribution, expressed in the brain, where it is localized principally in the ependymal cell layer, choroid plexus and the area postrema. Also found in spinal cord and in the eye.

It is found in the cell membrane. Receptor that may have an important role in cell/cell signaling during nervous system formation. This chain is Cadherin EGF LAG seven-pass G-type receptor 1 (Celsr1), found in Mus musculus (Mouse).